The sequence spans 513 residues: Chromosomal replication initiator protein DnaA (513 aa).

A domain I, interacts with DnaA modulators region spans residues 1-87 (MSVELWQQCV…IGSKRSSAPR (87 aa)). Residues 87–176 (RAAPNAPLAA…QVEGALKHTS (90 aa)) form a domain II region. Residues 113 to 163 (AAPAPAPAPTSAPAKKAAAQKAAEVSEEPSRDSFDPMAGASSQQAPVRAEQ) are disordered. Low complexity predominate over residues 123-135 (SAPAKKAAAQKAA). Residues 177 to 393 (YLNRTFTFEN…GALKRVIAHS (217 aa)) are domain III, AAA+ region. Residues Gly221, Gly223, Lys224, and Thr225 each contribute to the ATP site. A domain IV, binds dsDNA region spans residues 394 to 513 (HFMGRDITIE…YKNLLRTLTT (120 aa)).

It belongs to the DnaA family. In terms of assembly, oligomerizes as a right-handed, spiral filament on DNA at oriC.

It is found in the cytoplasm. In terms of biological role, plays an essential role in the initiation and regulation of chromosomal replication. ATP-DnaA binds to the origin of replication (oriC) to initiate formation of the DNA replication initiation complex once per cell cycle. Binds the DnaA box (a 9 base pair repeat at the origin) and separates the double-stranded (ds)DNA. Forms a right-handed helical filament on oriC DNA; dsDNA binds to the exterior of the filament while single-stranded (ss)DNA is stabiized in the filament's interior. The ATP-DnaA-oriC complex binds and stabilizes one strand of the AT-rich DNA unwinding element (DUE), permitting loading of DNA polymerase. After initiation quickly degrades to an ADP-DnaA complex that is not apt for DNA replication. Binds acidic phospholipids. In Pseudomonas fluorescens (strain ATCC BAA-477 / NRRL B-23932 / Pf-5), this protein is Chromosomal replication initiator protein DnaA.